Consider the following 306-residue polypeptide: Protein SEC13 homolog (306 aa).

6 WD repeats span residues glutamine 11–proline 50, glycine 56–threonine 97, threonine 102–glutamine 143, cysteine 150–threonine 195, cysteine 202–tryptophan 245, and glutamine 252–lysine 291.

This sequence belongs to the WD repeat SEC13 family. As to quaternary structure, probably part of the GATOR complex.

It localises to the cytoplasmic vesicle. The protein localises to the COPII-coated vesicle membrane. Its subcellular location is the endoplasmic reticulum membrane. The protein resides in the nucleus. It is found in the nuclear pore complex. It localises to the lysosome membrane. In terms of biological role, functions as a component of the nuclear pore complex (NPC) and the COPII coat. As a component of the GATOR complex may function in the amino acid-sensing branch of the TORC1 signaling pathway. The chain is Protein SEC13 homolog from Caenorhabditis briggsae.